A 580-amino-acid polypeptide reads, in one-letter code: Arginine--tRNA ligase (580 aa).

A 'HIGH' region motif is present at residues 127–137; it reads PNTHKELHVGH.

It belongs to the class-I aminoacyl-tRNA synthetase family. Monomer.

It is found in the cytoplasm. The enzyme catalyses tRNA(Arg) + L-arginine + ATP = L-arginyl-tRNA(Arg) + AMP + diphosphate. This is Arginine--tRNA ligase from Bdellovibrio bacteriovorus (strain ATCC 15356 / DSM 50701 / NCIMB 9529 / HD100).